The chain runs to 242 residues: uncharacterized protein (242 aa).

S-adenosyl-L-methionine is bound by residues Gly198, Ile218, and Leu227.

Belongs to the class IV-like SAM-binding methyltransferase superfamily. RNA methyltransferase TrmH family.

This is an uncharacterized protein from Mycoplasma pneumoniae (strain ATCC 29342 / M129 / Subtype 1) (Mycoplasmoides pneumoniae).